A 170-amino-acid polypeptide reads, in one-letter code: Transcription factor E (170 aa).

Positions 1–93 (MKDVYLYIVE…TWYVDDEIIK (93 aa)) constitute an HTH TFE/IIEalpha-type domain.

It belongs to the TFE family. Monomer. Interaction with RNA polymerase subunits RpoF and RpoE is necessary for Tfe stimulatory transcription activity. Able to interact with Tbp and RNA polymerase in the absence of DNA promoter. Interacts both with the preinitiation and elongation complexes.

Transcription factor that plays a role in the activation of archaeal genes transcribed by RNA polymerase. Facilitates transcription initiation by enhancing TATA-box recognition by TATA-box-binding protein (Tbp), and transcription factor B (Tfb) and RNA polymerase recruitment. Not absolutely required for transcription in vitro, but particularly important in cases where Tbp or Tfb function is not optimal. It dynamically alters the nucleic acid-binding properties of RNA polymerases by stabilizing the initiation complex and destabilizing elongation complexes. Seems to translocate with the RNA polymerase following initiation and acts by binding to the non template strand of the transcription bubble in elongation complexes. The sequence is that of Transcription factor E from Pyrobaculum aerophilum (strain ATCC 51768 / DSM 7523 / JCM 9630 / CIP 104966 / NBRC 100827 / IM2).